Here is a 199-residue protein sequence, read N- to C-terminus: Probable GTP-binding protein EngB (199 aa).

Residues 28–199 (DLPEVALAGR…EAWDTILAEL (172 aa)) enclose the EngB-type G domain. GTP-binding positions include 36 to 43 (GRSNVGKS), 63 to 67 (GKTQL), 81 to 84 (DVPG), 148 to 151 (TKAD), and 180 to 182 (FSS). The Mg(2+) site is built by S43 and T65.

The protein belongs to the TRAFAC class TrmE-Era-EngA-EngB-Septin-like GTPase superfamily. EngB GTPase family. Mg(2+) serves as cofactor.

Functionally, necessary for normal cell division and for the maintenance of normal septation. This is Probable GTP-binding protein EngB from Streptococcus thermophilus (strain CNRZ 1066).